The sequence spans 669 residues: Polyamine deacetylase HDAC10 (669 aa).

The interval M1–G323 is histone deacetylase. D20 is a substrate binding site. Residues P21–E24 carry the Substrate specificity motif. H135 acts as the Proton donor/acceptor in catalysis. Residues D172, H174, and D265 each contribute to the Zn(2+) site. A substrate-binding site is contributed by Y305. Residues D361–S373 show a composition bias toward polar residues. Residues D361–V387 are disordered. The residue at position 393 (S393) is a Phosphoserine.

The protein belongs to the histone deacetylase family. HD type 2 subfamily. As to quaternary structure, interacts with HDAC3. Interacts with HDAC2 and NCOR2/SMRT. Interacts with HSPA8/HSC70. Interacts with MSH2. As to expression, widely expressed with high levels in liver and kidney.

Its subcellular location is the cytoplasm. The protein localises to the nucleus. It catalyses the reaction N(8)-acetylspermidine + H2O = spermidine + acetate. The enzyme catalyses N-acetylputrescine + H2O = putrescine + acetate. It carries out the reaction N-acetylcadaverine + H2O = cadaverine + acetate. The catalysed reaction is N(6)-acetyl-L-lysyl-[protein] + H2O = L-lysyl-[protein] + acetate. In terms of biological role, polyamine deacetylase (PDAC), which acts preferentially on N(8)-acetylspermidine, and also on acetylcadaverine and acetylputrescine. Exhibits attenuated catalytic activity toward N(1),N(8)-diacetylspermidine and very low activity, if any, toward N(1)-acetylspermidine. Histone deacetylase activity has been observed in vitro. Has also been shown to be involved in MSH2 deacetylation. The physiological relevance of protein/histone deacetylase activity is unclear and could be very weak. May play a role in the promotion of late stages of autophagy, possibly autophagosome-lysosome fusion and/or lysosomal exocytosis in neuroblastoma cells. May play a role in homologous recombination. May promote DNA mismatch repair. The sequence is that of Polyamine deacetylase HDAC10 (HDAC10) from Homo sapiens (Human).